Consider the following 246-residue polypeptide: 14-3-3 protein eta (246 aa).

At glycine 2 the chain carries N-acetylglycine. Residues serine 25 and serine 59 each carry the phosphoserine modification.

This sequence belongs to the 14-3-3 family. In terms of assembly, homodimer. Interacts with many nuclear hormone receptors and cofactors including AR, ESR1, ESR2, MC2R, NR3C1, NRIP1, PPARBP and THRA. Interacts with ABL1 (phosphorylated form); the interaction retains it in the cytoplasm. Weakly interacts with CDKN1B. Interacts with ARHGEF28 and CDK16. Interacts with GAB2. Interacts with KCNK18 in a phosphorylation-dependent manner. Interacts with SAMSN1. Interacts with the 'Ser-241' phosphorylated form of PDPK1. Interacts with the 'Thr-369' phosphorylated form of DAPK2. Interacts with PI4KB, TBC1D22A and TBC1D22B. Interacts with SLITRK1. Interacts with MEFV. Phosphorylated on Ser-59 by protein kinase C delta type catalytic subunit in a sphingosine-dependent fashion.

It localises to the cytoplasm. Adapter protein implicated in the regulation of a large spectrum of both general and specialized signaling pathways. Binds to a large number of partners, usually by recognition of a phosphoserine or phosphothreonine motif. Binding generally results in the modulation of the activity of the binding partner. Negatively regulates the kinase activity of PDPK1. This chain is 14-3-3 protein eta (YWHAH), found in Bos taurus (Bovine).